Here is a 439-residue protein sequence, read N- to C-terminus: Indole-3-pyruvate monooxygenase YUCCA4 (439 aa).

Residue 49 to 54 participates in FAD binding; it reads GAGPAG. NADP(+) is bound at residue 226–231; that stretch reads GCGNSG.

It belongs to the FMO family. It depends on FAD as a cofactor.

It carries out the reaction indole-3-pyruvate + NADPH + O2 + H(+) = (indol-3-yl)acetate + CO2 + NADP(+) + H2O. In terms of biological role, involved in auxin biosynthesis in anthers. The chain is Indole-3-pyruvate monooxygenase YUCCA4 from Oryza sativa subsp. japonica (Rice).